A 277-amino-acid polypeptide reads, in one-letter code: F-actin-capping protein subunit beta isoforms 1 and 2 (277 aa).

Position 2 is an N-acetylserine (S2).

The protein belongs to the F-actin-capping protein beta subunit family. As to quaternary structure, component of the F-actin capping complex, composed of a heterodimer of an alpha and a beta subunit. Component of the WASH complex. In terms of assembly, component of the F-actin capping complex, composed of a heterodimer of an alpha and a beta subunit. Subunit of dynactin, a multiprotein complex part of a tripartite complex with dynein and a adapter, such as BICDL1, BICD2 or HOOK3. The dynactin complex is built around ACTR1A/ACTB filament and consists of an actin-related filament composed of a shoulder domain, a pointed end and a barbed end. Its length is defined by its flexible shoulder domain. As to expression, isoform 1 is detected in pectoral muscle, cardiac muscle and gizzard. Isoform 2 is detected in brain and liver (at protein level). Isoform 2 is the predominant isoform of nonmuscle tissues and isoform 1 is the predominant isoform of muscle tissues.

It localises to the cytoplasm. The protein resides in the myofibril. The protein localises to the sarcomere. It is found in the z line. Its subcellular location is the i band. It localises to the cytoskeleton. Its function is as follows. F-actin-capping proteins bind in a Ca(2+)-independent manner to the fast growing ends of actin filaments (barbed end) thereby blocking the exchange of subunits at these ends. Unlike other capping proteins (such as gelsolin and severin), these proteins do not sever actin filaments. May play a role in the regulation of cell morphology and cytoskeletal organization. Functionally, forms, with CAPZB, the barbed end of the fast growing ends of actin filaments in the dynactin complex and stabilizes dynactin structure. The dynactin multiprotein complex activates the molecular motor dynein for ultra-processive transport along microtubules. The chain is F-actin-capping protein subunit beta isoforms 1 and 2 (CAPZB) from Gallus gallus (Chicken).